The primary structure comprises 481 residues: UDP-N-acetylmuramoyl-L-alanyl-D-glutamate--L-lysine ligase (481 aa).

Position 42 (Ser-42) interacts with UDP-N-acetyl-alpha-D-muramoyl-L-alanyl-D-glutamate. 118–124 (GTKGKTT) is an ATP binding site. UDP-N-acetyl-alpha-D-muramoyl-L-alanyl-D-glutamate-binding positions include Gln-158, 160–161 (TT), Ser-187, and Arg-195. Lys-229 bears the N6-carboxylysine mark. Residues 404-407 (DDPN) carry the L-lysine recognition motif motif.

This sequence belongs to the MurCDEF family. MurE subfamily. Post-translationally, carboxylation is probably crucial for Mg(2+) binding and, consequently, for the gamma-phosphate positioning of ATP.

Its subcellular location is the cytoplasm. The catalysed reaction is UDP-N-acetyl-alpha-D-muramoyl-L-alanyl-D-glutamate + L-lysine + ATP = UDP-N-acetyl-alpha-D-muramoyl-L-alanyl-gamma-D-glutamyl-L-lysine + ADP + phosphate + H(+). It functions in the pathway cell wall biogenesis; peptidoglycan biosynthesis. Functionally, catalyzes the addition of L-lysine to the nucleotide precursor UDP-N-acetylmuramoyl-L-alanyl-D-glutamate (UMAG) in the biosynthesis of bacterial cell-wall peptidoglycan. The polypeptide is UDP-N-acetylmuramoyl-L-alanyl-D-glutamate--L-lysine ligase (Streptococcus pyogenes serotype M4 (strain MGAS10750)).